Consider the following 75-residue polypeptide: Supwaprin-a (75 aa).

An N-terminal signal peptide occupies residues 1–24 (MSSGGLLLLLGFLTLWAELTPVSG). A WAP domain is found at 27-72 (RPKKPGLCPPRPQKPPCVRECKNDWSCPGEQKCCRYGCIFECRDPI). 4 cysteine pairs are disulfide-bonded: C34-C60, C43-C64, C47-C59, and C53-C68.

Belongs to the venom waprin family. Expressed by the venom gland.

The protein localises to the secreted. Functionally, damages membranes of susceptible bacteria. Has no hemolytic activity. Not toxic to mice. Does not inhibit the proteinases elastase and cathepsin G. The protein is Supwaprin-a of Austrelaps superbus (Lowland copperhead snake).